A 348-amino-acid polypeptide reads, in one-letter code: Selenide, water dikinase (348 aa).

Sec-17 is a catalytic residue. Position 17 (Sec-17) is a non-standard amino acid, selenocysteine. ATP-binding positions include Lys-20 and 48 to 50 (TAD). Asp-51 contacts Mg(2+). ATP-binding positions include Asp-68, Asp-91, and 138–140 (GHT). Asp-91 contributes to the Mg(2+) binding site. Asp-226 is a binding site for Mg(2+).

This sequence belongs to the selenophosphate synthase 1 family. Class I subfamily. Homodimer. Requires Mg(2+) as cofactor.

It catalyses the reaction hydrogenselenide + ATP + H2O = selenophosphate + AMP + phosphate + 2 H(+). Synthesizes selenophosphate from selenide and ATP. This is Selenide, water dikinase from Clostridioides difficile (strain 630) (Peptoclostridium difficile).